The following is a 523-amino-acid chain: Calcium and calcium/calmodulin-dependent serine/threonine-protein kinase DMI-3 (523 aa).

The region spanning 12–306 (YEVSEILGRG…ALELLSDPWV (295 aa)) is the Protein kinase domain. Residues 18-26 (LGRGGFSVV) and Lys-47 each bind ATP. Asp-171 functions as the Proton acceptor in the catalytic mechanism. Residue Thr-271 is modified to Phosphothreonine. The calmodulin-binding stretch occupies residues 329–342 (ARRKLRAAAIASVW). EF-hand domains follow at residues 400–435 (SLIP…LKNS), 436–471 (KGED…LPYD), and 478–513 (TEPG…DSSL). Positions 413, 415, 417, 419, 424, 449, 451, 453, 455, 460, 491, 493, 495, 497, and 502 each coordinate Ca(2+).

The protein belongs to the protein kinase superfamily. CAMK Ser/Thr protein kinase family. CaMK subfamily. In terms of assembly, interacts with IPD3. In terms of processing, autophosphorylation. In terms of tissue distribution, highly expressed in roots. Expressed in root hairs and nodules. Expressed at low levels in flowers. Not detected in leaves or stems.

It localises to the nucleus. It catalyses the reaction L-seryl-[protein] + ATP = O-phospho-L-seryl-[protein] + ADP + H(+). The enzyme catalyses L-threonyl-[protein] + ATP = O-phospho-L-threonyl-[protein] + ADP + H(+). Activated by calcium. Autophosphorylation may play an important role in the regulation of the kinase activity. During nodulation, plays a central role in bacterial infection and contributes to nodule organogenesis. Protein kinase that recognizes the calcium spiking induced by Nod factors and translates this signal to components controlling nodulation and mycorrhizal infection responses. May phosphorylate the NSP1 protein. Required in epidermal and cortical cells to promote infection thread (IT) formation in root hairs. This is Calcium and calcium/calmodulin-dependent serine/threonine-protein kinase DMI-3 from Medicago truncatula (Barrel medic).